We begin with the raw amino-acid sequence, 431 residues long: Glutamate-1-semialdehyde 2,1-aminomutase (431 aa).

K270 is modified (N6-(pyridoxal phosphate)lysine).

This sequence belongs to the class-III pyridoxal-phosphate-dependent aminotransferase family. HemL subfamily. Homodimer. The cofactor is pyridoxal 5'-phosphate.

Its subcellular location is the cytoplasm. It carries out the reaction (S)-4-amino-5-oxopentanoate = 5-aminolevulinate. The protein operates within porphyrin-containing compound metabolism; protoporphyrin-IX biosynthesis; 5-aminolevulinate from L-glutamyl-tRNA(Glu): step 2/2. This is Glutamate-1-semialdehyde 2,1-aminomutase from Limosilactobacillus reuteri subsp. reuteri (strain JCM 1112) (Lactobacillus reuteri).